We begin with the raw amino-acid sequence, 375 residues long: Growth/differentiation factor 8 (375 aa).

An N-terminal signal peptide occupies residues 1 to 23 (MQKLAVYVYIYLFMLISVDPVAL). The propeptide occupies 24–266 (DDGSQPTENA…VTDTPKRSRR (243 aa)). Residue Asn71 is glycosylated (N-linked (GlcNAc...) asparagine). 4 cysteine pairs are disulfide-bonded: Cys272/Cys282, Cys281/Cys340, Cys309/Cys372, and Cys313/Cys374.

The protein belongs to the TGF-beta family. As to quaternary structure, homodimer; disulfide-linked.

The protein localises to the secreted. Its function is as follows. Acts specifically as a negative regulator of skeletal muscle growth. The chain is Growth/differentiation factor 8 (MSTN) from Anser anser anser (Western greylag goose).